A 148-amino-acid chain; its full sequence is Large ribosomal subunit protein bL9 (148 aa).

The protein belongs to the bacterial ribosomal protein bL9 family.

In terms of biological role, binds to the 23S rRNA. This Frankia alni (strain DSM 45986 / CECT 9034 / ACN14a) protein is Large ribosomal subunit protein bL9.